The following is a 157-amino-acid chain: Chromophore lyase CpcS/CpeS 1 (157 aa).

Belongs to the CpcS/CpeS biliprotein lyase family.

Its subcellular location is the plastid. It is found in the organellar chromatophore. In terms of biological role, covalently attaches a chromophore to Cys residue(s) of phycobiliproteins. The protein is Chromophore lyase CpcS/CpeS 1 of Paulinella chromatophora.